The primary structure comprises 343 residues: Fructose-1,6-bisphosphatase class 1 (343 aa).

Mg(2+)-binding residues include E91, D113, I115, and D116. Residues 116–119, N210, and K276 each bind substrate; that span reads DGSS. A Mg(2+)-binding site is contributed by E282.

Belongs to the FBPase class 1 family. In terms of assembly, homotetramer. Requires Mg(2+) as cofactor.

The protein localises to the cytoplasm. The enzyme catalyses beta-D-fructose 1,6-bisphosphate + H2O = beta-D-fructose 6-phosphate + phosphate. It functions in the pathway carbohydrate biosynthesis; gluconeogenesis. This Parvibaculum lavamentivorans (strain DS-1 / DSM 13023 / NCIMB 13966) protein is Fructose-1,6-bisphosphatase class 1.